A 311-amino-acid polypeptide reads, in one-letter code: Interleukin-20 receptor subunit beta (311 aa).

Positions 1-29 are cleaved as a signal peptide; that stretch reads MQTFTMVLEEIWTSLFMWFFYALIPCLLT. At 30-233 the chain is on the extracellular side; it reads DEVAILPAPQ…VEVQGEAIPL (204 aa). Fibronectin type-III domains lie at 37-136 and 144-228; these read APQN…RNST and EITK…EVQG. N-linked (GlcNAc...) asparagine glycosylation occurs at N40. A disulfide bridge links C89 with C97. An N-linked (GlcNAc...) asparagine glycan is attached at N134. Cysteines 202 and 223 form a disulfide. Residues 234-254 traverse the membrane as a helical segment; sequence VLALFAFVGFMLILVVVPLFV. Residues 255 to 311 are Cytoplasmic-facing; sequence WKMGRLLQYSCCPVVVLPDTLKITNSPQKLISCRREEVDACATAVMSPEELLRAWIS.

Belongs to the type II cytokine receptor family. In terms of assembly, heterodimer with IL20RA and heterodimer with IL22RA1. Widely expressed with highest levels in skin and testis. Highly expressed in psoriatic skin.

It localises to the membrane. Functionally, the IL20RA/IL20RB dimer is a receptor for IL19, IL20 and IL24. The IL22RA1/IL20RB dimer is a receptor for IL20 and IL24. The chain is Interleukin-20 receptor subunit beta (IL20RB) from Homo sapiens (Human).